Consider the following 271-residue polypeptide: Acetyl-coenzyme A carboxylase carboxyl transferase subunit alpha (271 aa).

Positions 1-247 (MSRELIRTAD…KKTILEALGE (247 aa)) constitute a CoA carboxyltransferase C-terminal domain.

This sequence belongs to the AccA family. In terms of assembly, acetyl-CoA carboxylase is a heterohexamer composed of biotin carboxyl carrier protein (AccB), biotin carboxylase (AccC) and two subunits each of ACCase subunit alpha (AccA) and ACCase subunit beta (AccD).

It localises to the cytoplasm. It carries out the reaction N(6)-carboxybiotinyl-L-lysyl-[protein] + acetyl-CoA = N(6)-biotinyl-L-lysyl-[protein] + malonyl-CoA. Its pathway is lipid metabolism; malonyl-CoA biosynthesis; malonyl-CoA from acetyl-CoA: step 1/1. In terms of biological role, component of the acetyl coenzyme A carboxylase (ACC) complex. First, biotin carboxylase catalyzes the carboxylation of biotin on its carrier protein (BCCP) and then the CO(2) group is transferred by the carboxyltransferase to acetyl-CoA to form malonyl-CoA. The sequence is that of Acetyl-coenzyme A carboxylase carboxyl transferase subunit alpha from Clostridium perfringens (strain 13 / Type A).